We begin with the raw amino-acid sequence, 433 residues long: MIIMLFKKLSDVSEAEMQRLISRGSGLADVGDTVSAVLSDVRMKGDAALREYTKKFDKVELANFEVSEEEFEKALSEIGSELLGHLRIAAENIRAFHRAQMPETTWFMELQPGVVLGQKATPLESVGAYAPGGRASYPSTVLMTVIPARVAGVEQVIVCTPPRADGSVHPLTLAAAKVAGADKVFKLGGVQAIGAMAYGTETVPRVDKIVGPGNVFVTSAKMQVRDIAEIDFPAGPSEVLIIADESADAAMAASDIIAQAEHDPNAVSVLVTTSETLAEEVEQEVLAQAESTARSEIVKISLENAAVLIADSLDQCIDFSNKFAPEHLEIMVEDSDFVLDRIKNAGSIFIGNYAPVPVGDYASGTNHVLPTAGYAKIYSGLNINHFLKYSSIQKISKSGLESLKETVIALAEEEGLKAHADSIRARFGYRPSK.

Y129, Q191, and N214 together coordinate NAD(+). The substrate site is built by S237, Q259, and H262. Residues Q259 and H262 each coordinate Zn(2+). Catalysis depends on proton acceptor residues E326 and H327. Positions 327, 360, 414, and 419 each coordinate substrate. Zn(2+) is bound at residue D360. H419 contributes to the Zn(2+) binding site.

This sequence belongs to the histidinol dehydrogenase family. It depends on Zn(2+) as a cofactor.

The enzyme catalyses L-histidinol + 2 NAD(+) + H2O = L-histidine + 2 NADH + 3 H(+). It participates in amino-acid biosynthesis; L-histidine biosynthesis; L-histidine from 5-phospho-alpha-D-ribose 1-diphosphate: step 9/9. Its function is as follows. Catalyzes the sequential NAD-dependent oxidations of L-histidinol to L-histidinaldehyde and then to L-histidine. This chain is Histidinol dehydrogenase, found in Methanosarcina mazei (strain ATCC BAA-159 / DSM 3647 / Goe1 / Go1 / JCM 11833 / OCM 88) (Methanosarcina frisia).